The sequence spans 92 residues: Bombyxin A-9 (92 aa).

An N-terminal signal peptide occupies residues 1–19 (MKLLLAIALMLTTVMWAST). Glutamine 20 carries the post-translational modification Pyrrolidone carboxylic acid. Intrachain disulfides connect cysteine 29-cysteine 79, cysteine 41-cysteine 92, and cysteine 78-cysteine 83. A propeptide spans 50 to 71 (SDAQFASYGSAWLMPYSEGRDQ) (c peptide like).

This sequence belongs to the insulin family. As to quaternary structure, heterodimer of a B chain and an A chain linked by two disulfide bonds.

The protein localises to the secreted. Functionally, brain peptide responsible for activation of prothoracic glands to produce ecdysone in insects. The chain is Bombyxin A-9 (BBXA9) from Bombyx mori (Silk moth).